A 199-amino-acid polypeptide reads, in one-letter code: UPF0301 protein Vapar_4617 (199 aa).

Belongs to the UPF0301 (AlgH) family.

This Variovorax paradoxus (strain S110) protein is UPF0301 protein Vapar_4617.